A 301-amino-acid chain; its full sequence is GTPase Era (301 aa).

Positions 8 to 174 (KSGFVALVGR…LKTLKDYLPE (167 aa)) constitute an Era-type G domain. The G1 stretch occupies residues 16-23 (GRPNVGKS). A GTP-binding site is contributed by 16–23 (GRPNVGKS). The G2 stretch occupies residues 42-46 (QTTRN). The interval 63–66 (DTPG) is G3. Residues 63-67 (DTPGI) and 124-127 (NKID) each bind GTP. The G4 stretch occupies residues 124–127 (NKID). Residues 153 to 155 (ISA) form a G5 region. In terms of domain architecture, KH type-2 spans 197–282 (IREQILRLTD…NLKLWVKVRR (86 aa)).

The protein belongs to the TRAFAC class TrmE-Era-EngA-EngB-Septin-like GTPase superfamily. Era GTPase family. Monomer.

It localises to the cytoplasm. The protein localises to the cell membrane. Its function is as follows. An essential GTPase that binds both GDP and GTP, with rapid nucleotide exchange. Plays a role in 16S rRNA processing and 30S ribosomal subunit biogenesis and possibly also in cell cycle regulation and energy metabolism. This Lactobacillus delbrueckii subsp. bulgaricus (strain ATCC 11842 / DSM 20081 / BCRC 10696 / JCM 1002 / NBRC 13953 / NCIMB 11778 / NCTC 12712 / WDCM 00102 / Lb 14) protein is GTPase Era.